Consider the following 105-residue polypeptide: NADH-quinone oxidoreductase subunit K (105 aa).

The next 3 membrane-spanning stretches (helical) occupy residues 8-28 (LAAYLILGAMLFSIGVVGVFL), 34-54 (IILLMAIELLLLAVNINLVAF), and 65-85 (VFVFFILTVAAAEAAIGLAIL).

It belongs to the complex I subunit 4L family. In terms of assembly, NDH-1 is composed of 14 different subunits. Subunits NuoA, H, J, K, L, M, N constitute the membrane sector of the complex.

The protein localises to the cell inner membrane. It catalyses the reaction a quinone + NADH + 5 H(+)(in) = a quinol + NAD(+) + 4 H(+)(out). Its function is as follows. NDH-1 shuttles electrons from NADH, via FMN and iron-sulfur (Fe-S) centers, to quinones in the respiratory chain. The immediate electron acceptor for the enzyme in this species is believed to be ubiquinone. Couples the redox reaction to proton translocation (for every two electrons transferred, four hydrogen ions are translocated across the cytoplasmic membrane), and thus conserves the redox energy in a proton gradient. This chain is NADH-quinone oxidoreductase subunit K, found in Acidithiobacillus ferrooxidans (strain ATCC 23270 / DSM 14882 / CIP 104768 / NCIMB 8455) (Ferrobacillus ferrooxidans (strain ATCC 23270)).